Consider the following 771-residue polypeptide: UPF0313 protein PSPTO_4928 (771 aa).

The Radical SAM core domain occupies 371-649 (AYDMIRFSVN…KAFLRYHDPK (279 aa)). [4Fe-4S] cluster contacts are provided by Cys-385, Cys-389, and Cys-392. The segment at 683 to 771 (DTYQSARRKN…KPARKPVVPR (89 aa)) is disordered. Composition is skewed to basic and acidic residues over residues 726–735 (KPWDKREEAK) and 745–754 (AAKERMDAAK). Residues 756-765 (GKGKGGKPAR) show a composition bias toward basic residues.

Belongs to the UPF0313 family. Requires [4Fe-4S] cluster as cofactor.

This Pseudomonas syringae pv. tomato (strain ATCC BAA-871 / DC3000) protein is UPF0313 protein PSPTO_4928.